The primary structure comprises 122 residues: Large ribosomal subunit protein uL14 (122 aa).

It belongs to the universal ribosomal protein uL14 family. In terms of assembly, part of the 50S ribosomal subunit. Forms a cluster with proteins L3 and L19. In the 70S ribosome, L14 and L19 interact and together make contacts with the 16S rRNA in bridges B5 and B8.

Functionally, binds to 23S rRNA. Forms part of two intersubunit bridges in the 70S ribosome. In Desulforapulum autotrophicum (strain ATCC 43914 / DSM 3382 / VKM B-1955 / HRM2) (Desulfobacterium autotrophicum), this protein is Large ribosomal subunit protein uL14.